A 273-amino-acid chain; its full sequence is Type II pantothenate kinase (273 aa).

8–15 (DAGGTLTK) lines the ATP pocket. Residue E76 is the Proton acceptor of the active site. ATP-binding positions include T105, 127–131 (GGTIM), F143, and S230.

It belongs to the type II pantothenate kinase family. Homodimer.

Its subcellular location is the cytoplasm. The catalysed reaction is (R)-pantothenate + ATP = (R)-4'-phosphopantothenate + ADP + H(+). It participates in cofactor biosynthesis; coenzyme A biosynthesis; CoA from (R)-pantothenate: step 1/5. Catalyzes the phosphorylation of pantothenate (Pan), the first step in CoA biosynthesis. This chain is Type II pantothenate kinase, found in Bacillus cereus (strain G9842).